The primary structure comprises 420 residues: L-rhamnose isomerase (420 aa).

Residues His264, Asp296, and Asp298 each contribute to the Mn(2+) site.

The protein belongs to the rhamnose isomerase family. Mn(2+) is required as a cofactor.

Its subcellular location is the cytoplasm. The enzyme catalyses L-rhamnopyranose = L-rhamnulose. Its pathway is carbohydrate degradation; L-rhamnose degradation; glycerone phosphate from L-rhamnose: step 1/3. Its function is as follows. Catalyzes the interconversion of L-rhamnose and L-rhamnulose. This chain is L-rhamnose isomerase, found in Listeria monocytogenes serovar 1/2a (strain ATCC BAA-679 / EGD-e).